The sequence spans 498 residues: Protein MGF 505-5R (498 aa).

It belongs to the asfivirus MGF 505 family.

Its function is as follows. Plays a role in virus cell tropism, and may be required for efficient virus replication in macrophages. The polypeptide is Protein MGF 505-5R (Ornithodoros (relapsing fever ticks)).